Consider the following 463-residue polypeptide: tRNA-2-methylthio-N(6)-dimethylallyladenosine synthase (463 aa).

An MTTase N-terminal domain is found at 5–125; the sequence is RKLHIKSYGC…LPQLLAKAEQ (121 aa). [4Fe-4S] cluster-binding residues include Cys-14, Cys-50, Cys-88, Cys-166, Cys-170, and Cys-173. Positions 152–384 constitute a Radical SAM core domain; it reads RARGISAFVT…QQLIDQQQSA (233 aa). The region spanning 387 to 449 is the TRAM domain; it reads KAAIGRTVEV…RYSLLGELAS (63 aa).

The protein belongs to the methylthiotransferase family. MiaB subfamily. Monomer. [4Fe-4S] cluster serves as cofactor.

It is found in the cytoplasm. It catalyses the reaction N(6)-dimethylallyladenosine(37) in tRNA + (sulfur carrier)-SH + AH2 + 2 S-adenosyl-L-methionine = 2-methylsulfanyl-N(6)-dimethylallyladenosine(37) in tRNA + (sulfur carrier)-H + 5'-deoxyadenosine + L-methionine + A + S-adenosyl-L-homocysteine + 2 H(+). Its function is as follows. Catalyzes the methylthiolation of N6-(dimethylallyl)adenosine (i(6)A), leading to the formation of 2-methylthio-N6-(dimethylallyl)adenosine (ms(2)i(6)A) at position 37 in tRNAs that read codons beginning with uridine. The chain is tRNA-2-methylthio-N(6)-dimethylallyladenosine synthase from Rhodopseudomonas palustris (strain ATCC BAA-98 / CGA009).